We begin with the raw amino-acid sequence, 197 residues long: Regulator of free ubiquitin chains 1 (197 aa).

It belongs to the RFU1 family.

The protein localises to the endosome. Functionally, inhibitor of the DOA4 deubiquitinase involved in the regulation of protein degradation by the proteasome and maintenance of a normal level of free ubiquitin. The polypeptide is Regulator of free ubiquitin chains 1 (RFU1) (Vanderwaltozyma polyspora (strain ATCC 22028 / DSM 70294 / BCRC 21397 / CBS 2163 / NBRC 10782 / NRRL Y-8283 / UCD 57-17) (Kluyveromyces polysporus)).